A 378-amino-acid polypeptide reads, in one-letter code: Phosphoserine aminotransferase (378 aa).

L-glutamate is bound at residue Arg53. Residues Trp117, Thr167, Asp190, and Gln213 each contribute to the pyridoxal 5'-phosphate site. Lys214 bears the N6-(pyridoxal phosphate)lysine mark. 255-256 (NT) serves as a coordination point for pyridoxal 5'-phosphate.

It belongs to the class-V pyridoxal-phosphate-dependent aminotransferase family. SerC subfamily. As to quaternary structure, homodimer. Requires pyridoxal 5'-phosphate as cofactor.

The protein resides in the cytoplasm. It catalyses the reaction O-phospho-L-serine + 2-oxoglutarate = 3-phosphooxypyruvate + L-glutamate. The enzyme catalyses 4-(phosphooxy)-L-threonine + 2-oxoglutarate = (R)-3-hydroxy-2-oxo-4-phosphooxybutanoate + L-glutamate. Its pathway is amino-acid biosynthesis; L-serine biosynthesis; L-serine from 3-phospho-D-glycerate: step 2/3. The protein operates within cofactor biosynthesis; pyridoxine 5'-phosphate biosynthesis; pyridoxine 5'-phosphate from D-erythrose 4-phosphate: step 3/5. In terms of biological role, catalyzes the reversible conversion of 3-phosphohydroxypyruvate to phosphoserine and of 3-hydroxy-2-oxo-4-phosphonooxybutanoate to phosphohydroxythreonine. The protein is Phosphoserine aminotransferase of Ralstonia pickettii (strain 12J).